A 425-amino-acid chain; its full sequence is MTAIIDIVGREILDSRGNPTVEVDVVLEDGSFGRAAVPSGASTGAHEAVELRDGGSRYLGKGVEKAVEVVNGKIFDAIAGMDAENQLLIDQTLIDLDGSANKGNLGANAILGVSLAVAKAAAQASGLPLYRYVGGTNAHVLPVPMMNIINGGAHADNPIDFQEFMILPVGATSIREAVRYGSEVFHTLKKRLKDAGHNTNVGDEGGFAPNLKNAQAALDFIMESIEKAGFKPGEDIALGLDCAATEFFKDGNYVYEGERKTRDPKAQAKYLAKLASDYPIVTIEDGMAEDDWEGWKYLTDLIGNKCQLVGDDLFVTNSARLRDGIRLGVANSILVKVNQIGSLSETLDAVETAHKAGYTAVMSHRSGETEDSTIADLAVATNCGQIKTGSLARSDRTAKYNQLIRIEEELGKQARYAGRSALKLL.

A (2R)-2-phosphoglycerate-binding site is contributed by glutamine 162. The active-site Proton donor is the glutamate 204. Aspartate 241, glutamate 284, and aspartate 311 together coordinate Mg(2+). The (2R)-2-phosphoglycerate site is built by lysine 336, arginine 365, serine 366, and lysine 387. Lysine 336 serves as the catalytic Proton acceptor.

This sequence belongs to the enolase family. It depends on Mg(2+) as a cofactor.

It is found in the cytoplasm. Its subcellular location is the secreted. The protein resides in the cell surface. It carries out the reaction (2R)-2-phosphoglycerate = phosphoenolpyruvate + H2O. Its pathway is carbohydrate degradation; glycolysis; pyruvate from D-glyceraldehyde 3-phosphate: step 4/5. In terms of biological role, catalyzes the reversible conversion of 2-phosphoglycerate (2-PG) into phosphoenolpyruvate (PEP). It is essential for the degradation of carbohydrates via glycolysis. The protein is Enolase of Brucella ovis (strain ATCC 25840 / 63/290 / NCTC 10512).